Here is a 149-residue protein sequence, read N- to C-terminus: Cytochrome c' (149 aa).

The N-terminal stretch at 1-19 (MRRVLLATLMAALPAAAMA) is a signal peptide. Heme c contacts are provided by arginine 29, threonine 89, alanine 90, cysteine 138, cysteine 141, and histidine 142.

As to quaternary structure, monomer and homodimer. Post-translationally, binds 1 heme c group covalently per subunit.

Cytochrome c' is the most widely occurring bacterial c-type cytochrome. Cytochromes c' are high-spin proteins and the heme has no sixth ligand. Their exact function is not known. The chain is Cytochrome c' (cycP) from Cereibacter sphaeroides (strain ATCC 17023 / DSM 158 / JCM 6121 / CCUG 31486 / LMG 2827 / NBRC 12203 / NCIMB 8253 / ATH 2.4.1.) (Rhodobacter sphaeroides).